A 620-amino-acid polypeptide reads, in one-letter code: UvrABC system protein C (620 aa).

The 80-residue stretch at 13-92 (DKPGVYIMKN…IKKYSPRYNI (80 aa)) folds into the GIY-YIG domain. The region spanning 204-239 (TSIIKKLKLEMEKAAEELEFEKAAKIRDRILAIELI) is the UVR domain.

The protein belongs to the UvrC family. In terms of assembly, interacts with UvrB in an incision complex.

It localises to the cytoplasm. Functionally, the UvrABC repair system catalyzes the recognition and processing of DNA lesions. UvrC both incises the 5' and 3' sides of the lesion. The N-terminal half is responsible for the 3' incision and the C-terminal half is responsible for the 5' incision. The chain is UvrABC system protein C from Clostridium perfringens (strain 13 / Type A).